The chain runs to 601 residues: Amino-acid acetyltransferase, mitochondrial (601 aa).

In terms of domain architecture, N-acetyltransferase spans 401–558 (FTMDNLIASK…KKKQNNKKKK (158 aa)).

It belongs to the acetyltransferase family.

The protein localises to the mitochondrion. It carries out the reaction L-glutamate + acetyl-CoA = N-acetyl-L-glutamate + CoA + H(+). It functions in the pathway amino-acid biosynthesis; L-arginine biosynthesis; N(2)-acetyl-L-ornithine from L-glutamate: step 1/4. Its function is as follows. N-acetylglutamate synthase involved in arginine biosynthesis. The sequence is that of Amino-acid acetyltransferase, mitochondrial (ARG2) from Lodderomyces elongisporus (strain ATCC 11503 / CBS 2605 / JCM 1781 / NBRC 1676 / NRRL YB-4239) (Yeast).